A 132-amino-acid polypeptide reads, in one-letter code: Small ribosomal subunit protein uS8 (132 aa).

This sequence belongs to the universal ribosomal protein uS8 family. As to quaternary structure, part of the 30S ribosomal subunit. Contacts proteins S5 and S12.

One of the primary rRNA binding proteins, it binds directly to 16S rRNA central domain where it helps coordinate assembly of the platform of the 30S subunit. The protein is Small ribosomal subunit protein uS8 of Stenotrophomonas maltophilia (strain R551-3).